We begin with the raw amino-acid sequence, 440 residues long: C-terminal-binding protein 1 (440 aa).

The interval 1-70 is interaction with GLIS2 1; it reads MGSSHLLNKG…EIHEKVLNEA (70 aa). NAD(+)-binding positions include serine 100, 180–185, aspartate 204, 237–243, 264–266, and aspartate 290; these read IGLGRV, CGLNEHN, and TAR. The active site involves arginine 266. An interaction with GLIS2 2 region spans residues 288–360; that stretch reads ALDVHESEPF…VNKDHLTAAT (73 aa). Glutamate 295 is an active-site residue. Serine 300 bears the Phosphoserine mark. The Proton donor role is filled by histidine 315. Residue 315–318 participates in NAD(+) binding; the sequence is HAAW. Residues 408–440 form a disordered region; it reads SHGLPPVAHPPHAPSPGQTVKPEADRDHASDQL. Serine 422 bears the Phosphoserine; by HIPK2 mark. Lysine 428 participates in a covalent cross-link: Glycyl lysine isopeptide (Lys-Gly) (interchain with G-Cter in SUMO). Basic and acidic residues predominate over residues 429 to 440; sequence PEADRDHASDQL.

The protein belongs to the D-isomer specific 2-hydroxyacid dehydrogenase family. As to quaternary structure, homo- or heterodimer. Heterodimer with CTBP2. Interacts with PRDM16; the interaction represses white adipose tissue (WAT)-specific genes expression. Interacts with GLIS2, FOXP2, HDAC4, HDAC5, HDAC9 and ZNF217. Interacts with ELK3 (via its PXDLS motif). Interacts with RBBP8 (via its PXDLS motif); the interaction is disrupted by binding to adenovirus E1A. Interacts with FOXP1, HIPK2, PNN, NRIP1, MECOM, ZFHX1B and WIZ. Interacts with ZNF366 (via PXDLS motif). Interaction with SATB1 (non-acetylated form); the interaction stabilizes its attachment to DNA and promotes transcription repression. Interacts with BCL6; the interaction is required for BCL6 transcriptional autoinhibition and inhibition of some BCL6 target genes. Interacts with IKZF4. Interacts with MCRIP1 (unphosphorylated form, via the PXDLS motif); competitively inhibiting CTBP-ZEB1 interaction. Interacts with Bassoon/BSN; this interaction targets and anchors CTBP1 to presynapses. Interacts with SIMC1. (Microbial infection) Interacts with Epstein-Barr virus EBNA3. Interacts with Epstein-Barr virus EBNA6; this interaction leads to gene repression, but also seems to interfere with the repressive function of CtBP pre-bound to DNA, leading to EBNA6 mediated up-regulation of many cellular genes. In terms of assembly, (Microbial infection) Interacts with adenovirus E1A protein (via its C-terminus); the interaction disrupts the interaction of CTBP1 with RBBP8. As to quaternary structure, (Microbial infection) Interacts with human adenovirus 5 E1A protein; this interaction seems to potentiate viral replication. Requires NAD(+) as cofactor. Post-translationally, the level of phosphorylation appears to be regulated during the cell cycle. Phosphorylation by HIPK2 on Ser-422 induces proteasomal degradation. In terms of processing, ADP-ribosylated; when cells are exposed to brefeldin A. Sumoylation on Lys-428 is promoted by the E3 SUMO-protein ligase CBX4. Expressed in germinal center B-cells.

It localises to the cytoplasm. It is found in the nucleus. Functionally, corepressor targeting diverse transcription regulators such as GLIS2 or BCL6. Has dehydrogenase activity. Involved in controlling the equilibrium between tubular and stacked structures in the Golgi complex. Functions in brown adipose tissue (BAT) differentiation. The protein is C-terminal-binding protein 1 (CTBP1) of Homo sapiens (Human).